The primary structure comprises 602 residues: Elongation factor 4 (602 aa).

Residues asparagine 2–arginine 184 form the tr-type G domain. GTP-binding positions include aspartate 14–threonine 19 and asparagine 131–aspartate 134.

This sequence belongs to the TRAFAC class translation factor GTPase superfamily. Classic translation factor GTPase family. LepA subfamily.

Its subcellular location is the cell inner membrane. It carries out the reaction GTP + H2O = GDP + phosphate + H(+). Its function is as follows. Required for accurate and efficient protein synthesis under certain stress conditions. May act as a fidelity factor of the translation reaction, by catalyzing a one-codon backward translocation of tRNAs on improperly translocated ribosomes. Back-translocation proceeds from a post-translocation (POST) complex to a pre-translocation (PRE) complex, thus giving elongation factor G a second chance to translocate the tRNAs correctly. Binds to ribosomes in a GTP-dependent manner. The sequence is that of Elongation factor 4 from Acidovorax ebreus (strain TPSY) (Diaphorobacter sp. (strain TPSY)).